The sequence spans 139 residues: ATP synthase epsilon chain (139 aa).

Belongs to the ATPase epsilon chain family. As to quaternary structure, F-type ATPases have 2 components, CF(1) - the catalytic core - and CF(0) - the membrane proton channel. CF(1) has five subunits: alpha(3), beta(3), gamma(1), delta(1), epsilon(1). CF(0) has three main subunits: a, b and c.

The protein localises to the cell membrane. Produces ATP from ADP in the presence of a proton gradient across the membrane. The protein is ATP synthase epsilon chain of Streptococcus sanguinis.